The primary structure comprises 337 residues: NADH-quinone oxidoreductase subunit H (337 aa).

9 helical membrane-spanning segments follow: residues 9–29, 50–70, 82–102, 115–135, 161–181, 186–206, 245–265, 273–293, and 313–333; these read GIPL…LLLV, PNVV…KFVF, GIFL…WAVI, VGIL…IMAG, IGFV…TAIV, TIWY…SALA, SILL…LPPI, VPGV…FAMV, and FLPI…GFDI.

It belongs to the complex I subunit 1 family. As to quaternary structure, NDH-1 is composed of 14 different subunits. Subunits NuoA, H, J, K, L, M, N constitute the membrane sector of the complex.

The protein localises to the cell inner membrane. It catalyses the reaction a quinone + NADH + 5 H(+)(in) = a quinol + NAD(+) + 4 H(+)(out). NDH-1 shuttles electrons from NADH, via FMN and iron-sulfur (Fe-S) centers, to quinones in the respiratory chain. The immediate electron acceptor for the enzyme in this species is believed to be ubiquinone. Couples the redox reaction to proton translocation (for every two electrons transferred, four hydrogen ions are translocated across the cytoplasmic membrane), and thus conserves the redox energy in a proton gradient. This subunit may bind ubiquinone. This Parvibaculum lavamentivorans (strain DS-1 / DSM 13023 / NCIMB 13966) protein is NADH-quinone oxidoreductase subunit H.